The following is a 488-amino-acid chain: Ribulose bisphosphate carboxylase large chain (488 aa).

The substrate site is built by N127 and T177. Residue K179 is the Proton acceptor of the active site. Residue K181 coordinates substrate. Mg(2+) is bound by residues K205, D207, and E208. Position 205 is an N6-carboxylysine (K205). The Proton acceptor role is filled by H297. Residues R298, H330, and S382 each contribute to the substrate site.

This sequence belongs to the RuBisCO large chain family. Type I subfamily. Heterohexadecamer of 8 large chains and 8 small chains. Mg(2+) is required as a cofactor.

It is found in the plastid. The protein resides in the chloroplast. The enzyme catalyses 2 (2R)-3-phosphoglycerate + 2 H(+) = D-ribulose 1,5-bisphosphate + CO2 + H2O. It carries out the reaction D-ribulose 1,5-bisphosphate + O2 = 2-phosphoglycolate + (2R)-3-phosphoglycerate + 2 H(+). Its function is as follows. RuBisCO catalyzes two reactions: the carboxylation of D-ribulose 1,5-bisphosphate, the primary event in carbon dioxide fixation, as well as the oxidative fragmentation of the pentose substrate in the photorespiration process. Both reactions occur simultaneously and in competition at the same active site. The sequence is that of Ribulose bisphosphate carboxylase large chain (rbcL) from Pyropia haitanensis (Red seaweed).